A 501-amino-acid chain; its full sequence is Acid-sensing ion channel 1A (501 aa).

Residues 1–54 (MKTSVMDLKVEPMDIDFDQPPPLQVFAHTSTLHGISHIFSYEKITAKCCLWVVF) are Cytoplasmic-facing. Residues 55-71 (FLSSLTFLMYVCIDRIQ) traverse the membrane as a helical segment. At 72-429 (FYLEYPHVTK…ETIEQRKAYE (358 aa)) the chain is on the extracellular side. 7 cysteine pairs are disulfide-bonded: cysteine 98–cysteine 199, cysteine 177–cysteine 184, cysteine 294–cysteine 369, cysteine 312–cysteine 365, cysteine 316–cysteine 363, cysteine 325–cysteine 347, and cysteine 327–cysteine 339. Asparagine 164 carries N-linked (GlcNAc...) asparagine glycosylation. Asparagine 370 is a glycosylation site (N-linked (GlcNAc...) asparagine). The chain crosses the membrane as a discontinuously helical span at residues 430–460 (VAGLLGDIGGQMGLFIGASILTILELFDYLY). The GAS motif; ion selectivity filter signature appears at 446–448 (GAS). The Cytoplasmic segment spans residues 461-501 (EVMKYRLCRCSNKKHHNNNNNTDHNAVFSLDDVNCHVSKFH).

It belongs to the amiloride-sensitive sodium channel (TC 1.A.6) family. ASIC1 subfamily. Homotrimer. Heterotrimer; with other ASIC proteins producing channel with different properties. Interacts with asic1c. As to expression, expressed in central nervous system. Faintly expressed in the trunk, presumably in dorsal root ganglia.

Its subcellular location is the cell membrane. It is found in the postsynaptic cell membrane. The protein localises to the cell projection. It localises to the dendrite. The catalysed reaction is Na(+)(in) = Na(+)(out). It carries out the reaction K(+)(in) = K(+)(out). The enzyme catalyses Li(+)(in) = Li(+)(out). It catalyses the reaction Ca(2+)(in) = Ca(2+)(out). Inhibited by the diuretic drug amiloride. In terms of biological role, forms voltage-independent, pH-gated trimeric sodium channels that act as postsynaptic excitatory receptors in the nervous system, playing a crucial role in regulating synaptic plasticity, learning, and memory. Upon extracellular pH drop this channel elicits transient, fast activating, and completely desensitizing inward currents. Displays high selectivity for sodium ions but can also permit the permeation of other cations. The chain is Acid-sensing ion channel 1A (asic1a) from Danio rerio (Zebrafish).